Here is a 381-residue protein sequence, read N- to C-terminus: Alcohol dehydrogenase class-3 (381 aa).

Cys49 contributes to the Zn(2+) binding site. Position 50 (His50) interacts with NAD(+). Residues Thr51 and His71 each coordinate an alcohol. The Zn(2+) site is built by His71, Glu72, Cys101, Cys104, Cys107, Cys115, and Cys179. Residues 204 to 209 (GLGTVG), Asp228, Lys233, Ile274, 297 to 299 (VGV), 322 to 324 (TAF), and Arg374 contribute to the NAD(+) site.

This sequence belongs to the zinc-containing alcohol dehydrogenase family. Class-III subfamily. As to quaternary structure, homodimer. Zn(2+) is required as a cofactor.

The protein resides in the cytoplasm. It catalyses the reaction a primary alcohol + NAD(+) = an aldehyde + NADH + H(+). It carries out the reaction a secondary alcohol + NAD(+) = a ketone + NADH + H(+). The catalysed reaction is S-(hydroxymethyl)glutathione + NADP(+) = S-formylglutathione + NADPH + H(+). The enzyme catalyses S-(hydroxymethyl)glutathione + NAD(+) = S-formylglutathione + NADH + H(+). This Oryza sativa subsp. japonica (Rice) protein is Alcohol dehydrogenase class-3.